The sequence spans 78 residues: Large ribosomal subunit protein bL28 (78 aa).

The segment at 1–23 is disordered; it reads MSRICQITGKKPLSGNKRSHSMN.

The protein belongs to the bacterial ribosomal protein bL28 family.

The chain is Large ribosomal subunit protein bL28 from Wigglesworthia glossinidia brevipalpis.